We begin with the raw amino-acid sequence, 212 residues long: LexA repressor (212 aa).

The H-T-H motif DNA-binding region spans 29-49 (VREIGEAVGLSSSSTIHGHIE). Active-site for autocatalytic cleavage activity residues include Ser133 and Lys171.

Belongs to the peptidase S24 family. Homodimer.

The catalysed reaction is Hydrolysis of Ala-|-Gly bond in repressor LexA.. Functionally, represses a number of genes involved in the response to DNA damage (SOS response), including recA and lexA. In the presence of single-stranded DNA, RecA interacts with LexA causing an autocatalytic cleavage which disrupts the DNA-binding part of LexA, leading to derepression of the SOS regulon and eventually DNA repair. This Leuconostoc mesenteroides subsp. mesenteroides (strain ATCC 8293 / DSM 20343 / BCRC 11652 / CCM 1803 / JCM 6124 / NCDO 523 / NBRC 100496 / NCIMB 8023 / NCTC 12954 / NRRL B-1118 / 37Y) protein is LexA repressor.